The primary structure comprises 110 residues: UPF0145 protein LMOf2365_0219 (110 aa).

The protein belongs to the UPF0145 family.

This Listeria monocytogenes serotype 4b (strain F2365) protein is UPF0145 protein LMOf2365_0219.